The sequence spans 165 residues: Small ribosomal subunit protein uS5 (165 aa).

The S5 DRBM domain occupies 10 to 73; sequence LKEKVVHINR…EDAKKNIVEV (64 aa).

It belongs to the universal ribosomal protein uS5 family. Part of the 30S ribosomal subunit. Contacts proteins S4 and S8.

In terms of biological role, with S4 and S12 plays an important role in translational accuracy. Its function is as follows. Located at the back of the 30S subunit body where it stabilizes the conformation of the head with respect to the body. This chain is Small ribosomal subunit protein uS5, found in Clostridium botulinum (strain ATCC 19397 / Type A).